An 842-amino-acid polypeptide reads, in one-letter code: Protein translocase subunit SecA (842 aa).

ATP-binding positions include glutamine 85, 103-107 (GEGKT), and aspartate 493. Residues cysteine 825, cysteine 827, cysteine 836, and histidine 837 each contribute to the Zn(2+) site.

It belongs to the SecA family. Monomer and homodimer. Part of the essential Sec protein translocation apparatus which comprises SecA, SecYEG and auxiliary proteins SecDF. Other proteins may also be involved. Zn(2+) serves as cofactor.

It is found in the cell membrane. Its subcellular location is the cytoplasm. It catalyses the reaction ATP + H2O + cellular proteinSide 1 = ADP + phosphate + cellular proteinSide 2.. Part of the Sec protein translocase complex. Interacts with the SecYEG preprotein conducting channel. Has a central role in coupling the hydrolysis of ATP to the transfer of proteins into and across the cell membrane, serving as an ATP-driven molecular motor driving the stepwise translocation of polypeptide chains across the membrane. The polypeptide is Protein translocase subunit SecA (Streptococcus uberis (strain ATCC BAA-854 / 0140J)).